A 432-amino-acid chain; its full sequence is 7-dehydrocholesterol reductase (432 aa).

9 helical membrane passes run Y12 to V34, L64 to G86, L107 to F126, G136 to I155, F195 to Y212, M227 to W249, F261 to V283, V287 to Y309, and S371 to L393.

This sequence belongs to the ERG4/ERG24 family.

The protein resides in the endoplasmic reticulum membrane. It catalyses the reaction cholesterol + NADP(+) = 7-dehydrocholesterol + NADPH + H(+). It participates in lipid metabolism; steroid biosynthesis. Its function is as follows. Production of cholesterol by reduction of C7-C8 double bond of 7-dehydrocholesterol (7-DHC). Lesions in the gene coding for the enzyme cause dwarfism. This is 7-dehydrocholesterol reductase (DWF5) from Arabidopsis thaliana (Mouse-ear cress).